An 867-amino-acid polypeptide reads, in one-letter code: V-set and immunoglobulin domain-containing protein 10-like (867 aa).

Residues methionine 1 to glycine 27 form the signal peptide. Topologically, residues leucine 28–alanine 776 are extracellular. A glycan (N-linked (GlcNAc...) asparagine) is linked at asparagine 32. The span at serine 35–serine 45 shows a compositional bias: low complexity. The disordered stretch occupies residues serine 35–tryptophan 60. Asparagine 88, asparagine 96, and asparagine 144 each carry an N-linked (GlcNAc...) asparagine glycan. Residues leucine 104–histidine 186 form a disordered region. Residues threonine 137–lysine 153 are compositionally biased toward polar residues. Residues proline 159–leucine 170 are compositionally biased toward basic and acidic residues. Residues serine 173–histidine 186 are compositionally biased toward polar residues. 2 Ig-like C2-type domains span residues proline 302–serine 394 and proline 402–asparagine 487. A disulfide bond links cysteine 324 and cysteine 378. Asparagine 423 carries N-linked (GlcNAc...) asparagine glycosylation. A disulfide bridge links cysteine 428 with cysteine 471. The N-linked (GlcNAc...) asparagine glycan is linked to asparagine 487. Residues alanine 602–arginine 627 form a disordered region. N-linked (GlcNAc...) asparagine glycosylation is found at asparagine 641 and asparagine 650. The helical transmembrane segment at isoleucine 777–leucine 797 threads the bilayer. The Cytoplasmic segment spans residues cysteine 798–leucine 867.

As to expression, expressed in the esophagus, particularly in the suprabasilar layers of the epithelium. Expression is largely reduced in esophageal metaplasia, dysplasia, and adenocarcinoma lesions.

The protein resides in the membrane. This Homo sapiens (Human) protein is V-set and immunoglobulin domain-containing protein 10-like (VSIG10L).